We begin with the raw amino-acid sequence, 284 residues long: MANALLVAAYKPPFLSSNACLSRLKKHFGMSKAGYLGTLDPFAKGVLVVGFGSYTRLFPHLQKVPKAYRATLWLGAKSASLDIEHIESIEIIPEYNQSDIEKILFSLKGTFDYTPPAFSAKHINGQRAYKLAREGKVFTLQQIQMSIYNITLLSYHHPFVHFEVSVSEGAYVRSIGEIIAKKLGVNGVLSSLERISEGQMSVSATEQIRILNPLEYLPYPQLENMHRFSKQMYDGKKITLKNAQKGKYIVCFEDFFSIIEIFSNGGIQYILNRIEYVDTFKKTR.

Aspartate 40 acts as the Nucleophile in catalysis.

Belongs to the pseudouridine synthase TruB family. Type 1 subfamily.

It catalyses the reaction uridine(55) in tRNA = pseudouridine(55) in tRNA. Responsible for synthesis of pseudouridine from uracil-55 in the psi GC loop of transfer RNAs. The sequence is that of tRNA pseudouridine synthase B from Helicobacter hepaticus (strain ATCC 51449 / 3B1).